The chain runs to 119 residues: MGQNDKAARRQKIKLRSKTRGQGTAASPRLCVFRSVSQIYAQLVDDVNGATLLAVSSMAKENKELKGTKTEVSHTIGKQIGEKALAQGITKVIFDRNGFRYHGRVKALAEGAREAGLVF.

Positions 1 to 26 (MGQNDKAARRQKIKLRSKTRGQGTAA) are disordered. A compositionally biased stretch (basic residues) spans 9 to 19 (RRQKIKLRSKT).

It belongs to the universal ribosomal protein uL18 family. As to quaternary structure, part of the 50S ribosomal subunit; part of the 5S rRNA/L5/L18/L25 subcomplex. Contacts the 5S and 23S rRNAs.

Its function is as follows. This is one of the proteins that bind and probably mediate the attachment of the 5S RNA into the large ribosomal subunit, where it forms part of the central protuberance. This Prosthecochloris aestuarii (strain DSM 271 / SK 413) protein is Large ribosomal subunit protein uL18.